A 167-amino-acid chain; its full sequence is Mediator of RNA polymerase II transcription subunit 10 (167 aa).

The disordered stretch occupies residues 54–92 (STHTKPHPPPPPPPQPTDPTTAAAPALRDNPDPPLSSIQ). The segment covering 60–70 (HPPPPPPPQPT) has biased composition (pro residues).

This sequence belongs to the Mediator complex subunit 10 family. In terms of assembly, component of the Mediator complex.

Its subcellular location is the nucleus. Its function is as follows. Component of the Mediator complex, a coactivator involved in the regulated transcription of nearly all RNA polymerase II-dependent genes. Mediator functions as a bridge to convey information from gene-specific regulatory proteins to the basal RNA polymerase II transcription machinery. Mediator is recruited to promoters by direct interactions with regulatory proteins and serves as a scaffold for the assembly of a functional preinitiation complex with RNA polymerase II and the general transcription factors. In Aspergillus clavatus (strain ATCC 1007 / CBS 513.65 / DSM 816 / NCTC 3887 / NRRL 1 / QM 1276 / 107), this protein is Mediator of RNA polymerase II transcription subunit 10 (nut2).